Consider the following 112-residue polypeptide: UPF0102 protein THEYE_A1950 (112 aa).

The protein belongs to the UPF0102 family.

The protein is UPF0102 protein THEYE_A1950 of Thermodesulfovibrio yellowstonii (strain ATCC 51303 / DSM 11347 / YP87).